The primary structure comprises 57 residues: Large ribosomal subunit protein uL30 (57 aa).

The protein belongs to the universal ribosomal protein uL30 family. In terms of assembly, part of the 50S ribosomal subunit.

The polypeptide is Large ribosomal subunit protein uL30 (Maridesulfovibrio salexigens (strain ATCC 14822 / DSM 2638 / NCIMB 8403 / VKM B-1763) (Desulfovibrio salexigens)).